A 548-amino-acid chain; its full sequence is Folylpolyglutamate synthase (548 aa).

130–133 (GKGS) contributes to the ATP binding site. Positions 157, 234, and 262 each coordinate Mg(2+). Residues Arg-382 and Asp-396 each coordinate ATP.

It belongs to the folylpolyglutamate synthase family. Requires a monovalent cation as cofactor.

The protein resides in the mitochondrion inner membrane. The protein localises to the mitochondrion matrix. It localises to the cytoplasm. The enzyme catalyses (6S)-5,6,7,8-tetrahydrofolyl-(gamma-L-Glu)(n) + L-glutamate + ATP = (6S)-5,6,7,8-tetrahydrofolyl-(gamma-L-Glu)(n+1) + ADP + phosphate + H(+). It participates in cofactor biosynthesis; tetrahydrofolylpolyglutamate biosynthesis. Its function is as follows. Catalyzes conversion of folates to polyglutamate derivatives allowing concentration of folate compounds in the cell and the intracellular retention of these cofactors, which are important substrates for most of the folate-dependent enzymes that are involved in one-carbon transfer reactions involved in purine, pyrimidine and amino acid synthesis. Required for methionine synthesis and maintenance of intact mitochondrial DNA. Involved in telomere maintenance. This is Folylpolyglutamate synthase from Saccharomyces cerevisiae (strain FostersB) (Baker's yeast).